Reading from the N-terminus, the 119-residue chain is Large ribosomal subunit protein bL20 (119 aa).

It belongs to the bacterial ribosomal protein bL20 family.

Binds directly to 23S ribosomal RNA and is necessary for the in vitro assembly process of the 50S ribosomal subunit. It is not involved in the protein synthesizing functions of that subunit. The sequence is that of Large ribosomal subunit protein bL20 from Paracoccus denitrificans (strain Pd 1222).